The sequence spans 252 residues: Vacuolar iron transporter 1 (252 aa).

Residues 1–38 are Cytoplasmic-facing; that stretch reads MAAATDGGGLPLLADKAASHSHHHHPERHFTSGEVVRD. Residues 39–59 form a helical membrane-spanning segment; that stretch reads VIMGVSDGLTVPFALAAGLSG. Residues 60–65 lie on the Vacuolar side of the membrane; the sequence is ASAPSS. Residues 66 to 86 traverse the membrane as a helical segment; sequence LVLTAGLAEVAAGAISMGLGG. The Cytoplasmic portion of the chain corresponds to 87–170; sequence YLAAKSEADH…PDPKRAIQSA (84 aa). The segment at 92–167 is cytoplasmic metal binding domain (MBD); that stretch reads SEADHYQREM…LEKPDPKRAI (76 aa). Fe cation-binding residues include Glu-104, Glu-107, Glu-115, Glu-118, Met-151, and Glu-155. A helical transmembrane segment spans residues 171–191; it reads LTIALSYVIGGLVPLLPYMFI. The Vacuolar portion of the chain corresponds to 192–196; it reads STAQN. Residues 197-217 form a helical membrane-spanning segment; that stretch reads AMLTSVGVTLVALLFFGYIKG. Residues 218–224 are Cytoplasmic-facing; it reads RFTGNRP. The chain crosses the membrane as a helical span at residues 225–245; it reads FLSAVQTAIIGALASAAAYGM. The Vacuolar segment spans residues 246–252; that stretch reads AKAVQTR.

This sequence belongs to the CCC1 family. As to quaternary structure, homodimer. The dimeric interaction is mediated by both the transmembrane domains (TMDs) and the cytoplasmic metal binding domain (MBD). Highly expressed in leaf blades. Expressed in leaf sheaths.

The protein localises to the vacuole membrane. The enzyme catalyses Fe(2+)(in) = Fe(2+)(out). Vacuolar iron transporter involved in the transfer of iron ions from the cytosol to the vacuole for intracellular iron storage. Vacuolar iron storage is required for seed embryo and seedling development. May be involved in the regulation of iron translocation between flag leaves and seeds. Can transport zinc ions from the cytosol to the vacuole. This is Vacuolar iron transporter 1 from Oryza sativa subsp. japonica (Rice).